Consider the following 138-residue polypeptide: Sec-independent protein translocase protein TatB (138 aa).

A helical transmembrane segment spans residues 1-21; sequence MFDIGFSELLLIAVVALVVLG. A disordered region spans residues 116–138; that stretch reads VHHVHVPPPSTSTHGNNGQEKSQ. A compositionally biased stretch (polar residues) spans 126–138; sequence TSTHGNNGQEKSQ.

Belongs to the TatB family. In terms of assembly, the Tat system comprises two distinct complexes: a TatABC complex, containing multiple copies of TatA, TatB and TatC subunits, and a separate TatA complex, containing only TatA subunits. Substrates initially bind to the TatABC complex, which probably triggers association of the separate TatA complex to form the active translocon.

The protein resides in the cell inner membrane. Functionally, part of the twin-arginine translocation (Tat) system that transports large folded proteins containing a characteristic twin-arginine motif in their signal peptide across membranes. Together with TatC, TatB is part of a receptor directly interacting with Tat signal peptides. TatB may form an oligomeric binding site that transiently accommodates folded Tat precursor proteins before their translocation. In Xylella fastidiosa (strain Temecula1 / ATCC 700964), this protein is Sec-independent protein translocase protein TatB.